Reading from the N-terminus, the 60-residue chain is Large ribosomal subunit protein uL30 (60 aa).

This sequence belongs to the universal ribosomal protein uL30 family. As to quaternary structure, part of the 50S ribosomal subunit.

In Syntrophobacter fumaroxidans (strain DSM 10017 / MPOB), this protein is Large ribosomal subunit protein uL30.